The sequence spans 361 residues: NAD-dependent protein deacetylase hst2-1 (361 aa).

Positions serine 16–glutamate 276 constitute a Deacetylase sirtuin-type domain. NAD(+)-binding positions include glycine 43–tyrosine 63 and glutamine 126–aspartate 129. Catalysis depends on histidine 146, which acts as the Proton acceptor. Cysteine 154, cysteine 157, cysteine 178, and cysteine 181 together coordinate Zn(2+). NAD(+)-binding positions include glycine 217–serine 219, asparagine 242–glutamate 244, and cysteine 262. A coiled-coil region spans residues glutamate 294 to tyrosine 328. The tract at residues arginine 335–arginine 361 is disordered.

It belongs to the sirtuin family. Class I subfamily. Zn(2+) serves as cofactor.

It localises to the cytoplasm. The protein localises to the nucleus. The enzyme catalyses N(6)-acetyl-L-lysyl-[protein] + NAD(+) + H2O = 2''-O-acetyl-ADP-D-ribose + nicotinamide + L-lysyl-[protein]. In terms of biological role, NAD-dependent histone deacetylase, which could function in telomeric silencing, cell cycle progression and chromosome stability. The protein is NAD-dependent protein deacetylase hst2-1 of Emericella nidulans (strain FGSC A4 / ATCC 38163 / CBS 112.46 / NRRL 194 / M139) (Aspergillus nidulans).